The sequence spans 223 residues: Serine/threonine/tyrosine-interacting protein A (223 aa).

Residues 28 to 176 form the Tyrosine-protein phosphatase domain; that stretch reads EMQEILPGLF…LQEYEAIYLA (149 aa).

Belongs to the protein-tyrosine phosphatase family. Non-receptor class subfamily.

Catalytically inactive phosphatase. This is Serine/threonine/tyrosine-interacting protein A (styx-a) from Xenopus laevis (African clawed frog).